The primary structure comprises 805 residues: Leucine--tRNA ligase (805 aa).

A 'HIGH' region motif is present at residues 40–51; the sequence is PYPSGSGLHVGH. The 'KMSKS' region signature appears at 576 to 580; it reads KMSKS. Lys-579 contributes to the ATP binding site.

It belongs to the class-I aminoacyl-tRNA synthetase family.

The protein resides in the cytoplasm. The enzyme catalyses tRNA(Leu) + L-leucine + ATP = L-leucyl-tRNA(Leu) + AMP + diphosphate. The protein is Leucine--tRNA ligase of Chlorobium luteolum (strain DSM 273 / BCRC 81028 / 2530) (Pelodictyon luteolum).